We begin with the raw amino-acid sequence, 368 residues long: Propane 2-monooxygenase, hydroxylase component small subunit (368 aa).

The protein belongs to the TmoE/XamoE family. As to quaternary structure, the propane 2-monooxygenase multicomponent enzyme system is composed of an electron transfer component and a monooxygenase component interacting with the effector protein PrmD. The electron transfer component is composed of a reductase (PrmB), and the monooxygenase component is formed by a large subunit (PrmA) and a small subunit (PrmC). Probably requires the presence of the chaperonin-like protein PrmG to ensure a productive folding, resulting of a soluble PrmC, which leads to the active form of PrmABCD.

The enzyme catalyses propane + NADH + O2 + H(+) = propan-2-ol + NAD(+) + H2O. In terms of biological role, component of the propane 2-monooxygenase multicomponent enzyme system which is involved in the degradation of propane via the O2-dependent hydroxylation of propane. Also able to catalyze the oxidation the water contaminant N-nitrosodimethylamine (NDMA). The sequence is that of Propane 2-monooxygenase, hydroxylase component small subunit from Rhodococcus jostii (strain RHA1).